Reading from the N-terminus, the 269-residue chain is Probable 3-deoxy-manno-octulosonic acid transferase (269 aa).

It is found in the cytoplasm. The enzyme catalyses an alpha-Kdo-(2-&gt;4)-alpha-Kdo-(2-&gt;6)-lipid IVA + CMP-3-deoxy-beta-D-manno-octulosonate = an alpha-Kdo-(2-&gt;4)-alpha-Kdo-(2-&gt;4)-alpha-Kdo-(2-&gt;6)-lipid IVA + CMP + H(+). Its pathway is bacterial outer membrane biogenesis; LPS core biosynthesis. Its function is as follows. Involved in the biosynthesis of the core oligosaccharide region of lipopolysaccharide (LPS). Required for the addition of 3-deoxy-D-manno-oct-2-ulosonic acid III (KdoIII) to the KdoII residue of the inner lipopolysaccharide core. This chain is Probable 3-deoxy-manno-octulosonic acid transferase, found in Salmonella typhimurium (strain LT2 / SGSC1412 / ATCC 700720).